A 289-amino-acid chain; its full sequence is 4-hydroxy-3-methylbut-2-enyl diphosphate reductase (289 aa).

[4Fe-4S] cluster is bound at residue Cys-13. His-42 and His-74 together coordinate (2E)-4-hydroxy-3-methylbut-2-enyl diphosphate. Dimethylallyl diphosphate-binding residues include His-42 and His-74. Positions 42 and 74 each coordinate isopentenyl diphosphate. Position 96 (Cys-96) interacts with [4Fe-4S] cluster. Position 124 (His-124) interacts with (2E)-4-hydroxy-3-methylbut-2-enyl diphosphate. Residue His-124 coordinates dimethylallyl diphosphate. Residue His-124 participates in isopentenyl diphosphate binding. Catalysis depends on Glu-126, which acts as the Proton donor. Thr-165 is a binding site for (2E)-4-hydroxy-3-methylbut-2-enyl diphosphate. Residue Cys-193 coordinates [4Fe-4S] cluster. Ser-221, Asn-223, and Ser-265 together coordinate (2E)-4-hydroxy-3-methylbut-2-enyl diphosphate. Residues Ser-221, Asn-223, and Ser-265 each contribute to the dimethylallyl diphosphate site. The isopentenyl diphosphate site is built by Ser-221, Asn-223, and Ser-265.

Belongs to the IspH family. Requires [4Fe-4S] cluster as cofactor.

It catalyses the reaction isopentenyl diphosphate + 2 oxidized [2Fe-2S]-[ferredoxin] + H2O = (2E)-4-hydroxy-3-methylbut-2-enyl diphosphate + 2 reduced [2Fe-2S]-[ferredoxin] + 2 H(+). It carries out the reaction dimethylallyl diphosphate + 2 oxidized [2Fe-2S]-[ferredoxin] + H2O = (2E)-4-hydroxy-3-methylbut-2-enyl diphosphate + 2 reduced [2Fe-2S]-[ferredoxin] + 2 H(+). Its pathway is isoprenoid biosynthesis; dimethylallyl diphosphate biosynthesis; dimethylallyl diphosphate from (2E)-4-hydroxy-3-methylbutenyl diphosphate: step 1/1. It functions in the pathway isoprenoid biosynthesis; isopentenyl diphosphate biosynthesis via DXP pathway; isopentenyl diphosphate from 1-deoxy-D-xylulose 5-phosphate: step 6/6. With respect to regulation, highly sensitive to dioxygen. Functionally, catalyzes the conversion of 1-hydroxy-2-methyl-2-(E)-butenyl 4-diphosphate (HMBPP) into a mixture of isopentenyl diphosphate (IPP) and dimethylallyl diphosphate (DMAPP). Acts in the terminal step of the DOXP/MEP pathway for isoprenoid precursor biosynthesis. The sequence is that of 4-hydroxy-3-methylbut-2-enyl diphosphate reductase from Aquifex aeolicus (strain VF5).